Here is a 349-residue protein sequence, read N- to C-terminus: Aspartate-semialdehyde dehydrogenase (349 aa).

NADP(+) is bound by residues Thr-12–Val-15 and Asn-39–Ser-40. Arg-113 contributes to the phosphate binding site. Cys-148 serves as the catalytic Acyl-thioester intermediate. Residue Gln-175 coordinates substrate. Ser-178–Gly-179 is an NADP(+) binding site. Glu-201 lines the substrate pocket. Phosphate is bound at residue Lys-204. Residue Arg-234 participates in substrate binding. His-241 (proton acceptor) is an active-site residue. Asn-326–Thr-327 lines the NADP(+) pocket.

Belongs to the aspartate-semialdehyde dehydrogenase family. As to quaternary structure, homodimer.

It carries out the reaction L-aspartate 4-semialdehyde + phosphate + NADP(+) = 4-phospho-L-aspartate + NADPH + H(+). The protein operates within amino-acid biosynthesis; L-lysine biosynthesis via DAP pathway; (S)-tetrahydrodipicolinate from L-aspartate: step 2/4. It participates in amino-acid biosynthesis; L-methionine biosynthesis via de novo pathway; L-homoserine from L-aspartate: step 2/3. Its pathway is amino-acid biosynthesis; L-threonine biosynthesis; L-threonine from L-aspartate: step 2/5. Catalyzes the NADPH-dependent formation of L-aspartate-semialdehyde (L-ASA) by the reductive dephosphorylation of L-aspartyl-4-phosphate. This Leptospira interrogans serogroup Icterohaemorrhagiae serovar copenhageni (strain Fiocruz L1-130) protein is Aspartate-semialdehyde dehydrogenase.